The sequence spans 360 residues: Peptide chain release factor 1 (360 aa).

The residue at position 237 (Gln-237) is an N5-methylglutamine.

The protein belongs to the prokaryotic/mitochondrial release factor family. In terms of processing, methylated by PrmC. Methylation increases the termination efficiency of RF1.

It localises to the cytoplasm. In terms of biological role, peptide chain release factor 1 directs the termination of translation in response to the peptide chain termination codons UAG and UAA. This is Peptide chain release factor 1 from Pseudomonas entomophila (strain L48).